Reading from the N-terminus, the 130-residue chain is MPASLRSPLAIILGAIPGALARYYATIFLAGLFGNDLPYATFLINFSGCVGMGLVVTLATQPALMSPDLRLLLAVGFLGSYTTFSTYALEVTSLWRMGQLGQGVLYGLGSLGIGTIGVLLGSLIARRLTI.

4 helical membrane-spanning segments follow: residues 9–29, 39–59, 71–91, and 104–124; these read LAII…TIFL, YATF…VTLA, LLLA…ALEV, and VLYG…GSLI. Residues glycine 79 and threonine 82 each contribute to the Na(+) site.

It belongs to the fluoride channel Fluc/FEX (TC 1.A.43) family.

Its subcellular location is the cell inner membrane. The catalysed reaction is fluoride(in) = fluoride(out). Na(+) is not transported, but it plays an essential structural role and its presence is essential for fluoride channel function. Its function is as follows. Fluoride-specific ion channel. Important for reducing fluoride concentration in the cell, thus reducing its toxicity. This chain is Fluoride-specific ion channel FluC, found in Synechocystis sp. (strain ATCC 27184 / PCC 6803 / Kazusa).